The following is a 115-amino-acid chain: Galanin-like peptide (115 aa).

A signal peptide spans methionine 1–serine 23. The propeptide occupies asparagine 86 to serine 115.

Belongs to the galanin family. As to expression, hypothalamus and pituitary gland.

The protein resides in the secreted. Its function is as follows. Hypothalamic neuropeptide which binds to the G-protein-coupled galanin receptors (GALR1, GALR2 and GALR3). Involved in a large number of putative physiological functions in CNS homeostatic processes, including the regulation of gonadotropin-releasing hormone secretion. Exhibits potent and dose-dependent vasoconstrictor and anti-edema activity in the cutaneous microvasculature, a physiologic effects which does not appear to be mediated via GALR1 or GALR2. Exhibits antimicrobial activity against Gram-negative bacterias, inducing bacterial membrane blebbing. The protein is Galanin-like peptide (GALP) of Macaca nemestrina (Pig-tailed macaque).